The following is a 422-amino-acid chain: L-threonine dehydratase biosynthetic IlvA (422 aa).

Lysine 56 carries the N6-(pyridoxal phosphate)lysine modification. Pyridoxal 5'-phosphate is bound by residues asparagine 83, 189 to 193 (GGGGL), and serine 315. Residues 339 to 413 (HYFILNFPQR…FDPSNIYINE (75 aa)) form the ACT-like domain.

Belongs to the serine/threonine dehydratase family. In terms of assembly, homotetramer. Pyridoxal 5'-phosphate is required as a cofactor.

The catalysed reaction is L-threonine = 2-oxobutanoate + NH4(+). It participates in amino-acid biosynthesis; L-isoleucine biosynthesis; 2-oxobutanoate from L-threonine: step 1/1. Its function is as follows. Catalyzes the anaerobic formation of alpha-ketobutyrate and ammonia from threonine in a two-step reaction. The first step involved a dehydration of threonine and a production of enamine intermediates (aminocrotonate), which tautomerizes to its imine form (iminobutyrate). Both intermediates are unstable and short-lived. The second step is the nonenzymatic hydrolysis of the enamine/imine intermediates to form 2-ketobutyrate and free ammonia. In the low water environment of the cell, the second step is accelerated by RidA. This Staphylococcus aureus (strain bovine RF122 / ET3-1) protein is L-threonine dehydratase biosynthetic IlvA (ilvA).